The sequence spans 95 residues: Ragulator complex protein LAMTOR4 homolog (95 aa).

This sequence belongs to the LAMTOR4 family. As to quaternary structure, part of the Ragulator complex.

Its subcellular location is the lysosome. Its function is as follows. Regulator of the TOR pathway, a signaling cascade that promotes cell growth in response to growth factors, energy levels, and amino acids. As part of the Ragulator complex, may activate the TOR signaling cascade in response to amino acids. This chain is Ragulator complex protein LAMTOR4 homolog, found in Nematostella vectensis (Starlet sea anemone).